A 183-amino-acid polypeptide reads, in one-letter code: Translation initiation factor IF-3 (183 aa).

It belongs to the IF-3 family. As to quaternary structure, monomer.

The protein resides in the cytoplasm. In terms of biological role, IF-3 binds to the 30S ribosomal subunit and shifts the equilibrium between 70S ribosomes and their 50S and 30S subunits in favor of the free subunits, thus enhancing the availability of 30S subunits on which protein synthesis initiation begins. The polypeptide is Translation initiation factor IF-3 (Yersinia enterocolitica serotype O:8 / biotype 1B (strain NCTC 13174 / 8081)).